A 176-amino-acid chain; its full sequence is bZIP transcription factor 8 (176 aa).

Positions 44–101 (PNTSGGSDESMSDGSKIDPKRSPKYLEKRMKNNEAAKKSRASRKHREQKNQTENELLK) are disordered. The span at 47–57 (SGGSDESMSDG) shows a compositional bias: low complexity. Positions 58 to 80 (SKIDPKRSPKYLEKRMKNNEAAK) are enriched in basic and acidic residues. The bZIP domain maps to 65–128 (SPKYLEKRMK…AQMQITIRDM (64 aa)). The basic motif stretch occupies residues 67–92 (KYLEKRMKNNEAAKKSRASRKHREQK). The segment covering 81–90 (KSRASRKHRE) has biased composition (basic residues). Residues 91-101 (QKNQTENELLK) are compositionally biased toward basic and acidic residues. The interval 100–107 (LKRKNAAL) is leucine-zipper.

Belongs to the bZIP family.

The polypeptide is bZIP transcription factor 8 (zip-8) (Caenorhabditis elegans).